The following is a 308-amino-acid chain: Very-long-chain enoyl-CoA reductase (308 aa).

The Cytoplasmic segment spans residues 1-86 (MKHYEVEILD…YFRDLGAQIS (86 aa)). At Lys-22 the chain carries N6-acetyllysine. Ser-58 carries the phosphoserine modification. At Lys-60 the chain carries N6-acetyllysine. A helical transmembrane segment spans residues 87–106 (WVTVFLTEYAGPLFIYLLFY). Residues 107–124 (FRVPFIYGRKYDFTSSRH) lie on the Lumenal side of the membrane. A helical transmembrane segment spans residues 125-147 (TVVHLACICHSFHYIKRLLETLF). Residues 148–158 (VHRFSHGTMPL) lie on the Cytoplasmic side of the membrane. The helical transmembrane segment at 159-180 (RNIFKNCTYYWGFAAWMAYYIN) threads the bilayer. The Lumenal portion of the chain corresponds to 181–189 (HPLYTPPTY). A helical membrane pass occupies residues 190–216 (GAQQVKLALAIFVICQLGNFSIHMALR). At 217–245 (DLRPAGSKTRKIPYPTRNPFTWLFLLVSC) the chain is on the cytoplasmic side. A helical transmembrane segment spans residues 246 to 262 (PNYTYEVGSWIGFAIMT). Over 263 to 264 (QC) the chain is Lumenal. A helical transmembrane segment spans residues 265-292 (LPVALFSLVGFTQMTIWAKGKHRSYLKE). Residues 293–308 (FRDYPPLRMPIIPFLL) lie on the Cytoplasmic side of the membrane.

This sequence belongs to the steroid 5-alpha reductase family. As to quaternary structure, interacts with ELOVL1 and LASS2. In terms of processing, glycosylated.

The protein resides in the endoplasmic reticulum membrane. It catalyses the reaction a very-long-chain 2,3-saturated fatty acyl-CoA + NADP(+) = a very-long-chain (2E)-enoyl-CoA + NADPH + H(+). It carries out the reaction octadecanoyl-CoA + NADP(+) = (2E)-octadecenoyl-CoA + NADPH + H(+). The catalysed reaction is (2E,7Z,10Z,13Z,16Z)-docosapentaenoyl-CoA + NADPH + H(+) = (7Z,10Z,13Z,16Z)-docosatetraenoyl-CoA + NADP(+). The enzyme catalyses (2E,7Z,10Z,13Z,16Z,19Z)-docosahexaenoyl-CoA + NADPH + H(+) = (7Z,10Z,13Z,16Z,19Z)-docosapentaenoyl-CoA + NADP(+). It catalyses the reaction (2E,8Z,11Z,14Z)-eicosatetraenoyl-CoA + NADPH + H(+) = (8Z,11Z,14Z)-eicosatrienoyl-CoA + NADP(+). It carries out the reaction (2E)-hexadecenoyl-CoA + NADPH + H(+) = hexadecanoyl-CoA + NADP(+). It participates in lipid metabolism; fatty acid biosynthesis. The protein operates within lipid metabolism; sphingolipid metabolism. Involved in both the production of very long-chain fatty acids for sphingolipid synthesis and the degradation of the sphingosine moiety in sphingolipids through the sphingosine 1-phosphate metabolic pathway. Catalyzes the last of the four reactions of the long-chain fatty acids elongation cycle. This endoplasmic reticulum-bound enzymatic process, allows the addition of 2 carbons to the chain of long- and very long-chain fatty acids/VLCFAs per cycle. This enzyme reduces the trans-2,3-enoyl-CoA fatty acid intermediate to an acyl-CoA that can be further elongated by entering a new cycle of elongation. Thereby, it participates in the production of VLCFAs of different chain lengths that are involved in multiple biological processes as precursors of membrane lipids and lipid mediators. Catalyzes the saturation step of the sphingosine 1-phosphate metabolic pathway, the conversion of trans-2-hexadecenoyl-CoA to palmitoyl-CoA. The polypeptide is Very-long-chain enoyl-CoA reductase (TECR) (Bos taurus (Bovine)).